A 196-amino-acid polypeptide reads, in one-letter code: Charged multivesicular body protein 1a (196 aa).

M1 is subject to N-acetylmethionine. The stretch at 5–42 forms a coiled coil; that stretch reads LFQLKFTAKQLEKLAKKAEKDSKAEQAKVKKALQQKNV. At S101 the chain carries Phosphoserine. Positions 102–124 form a coiled coil; the sequence is AMDLQKVSAVMDRFEQQVQNLDV. S173 carries the phosphoserine modification. An MIT-interacting motif motif is present at residues 185-195; the sequence is DQLSRRLAALR.

This sequence belongs to the SNF7 family. As to quaternary structure, probable peripherally associated component of the endosomal sorting required for transport complex III (ESCRT-III). ESCRT-III components are thought to multimerize to form a flat lattice on the perimeter membrane of the endosome. Several assembly forms of ESCRT-III may exist that interact and act sequentially. Self-associates. Interacts with CHMP1B. Interacts with VPS4A. Interacts with VPS4B. Interacts with PHF1. Interacts with IST1. Interacts with MITD1. Highly expressed in adult heart, kidney and liver. Expressed at lower levels in adult colon, spleen, lung, brain, testis and muscle. Also expressed in myoblasts and embryo fibroblasts.

The protein resides in the cytoplasm. The protein localises to the endosome membrane. Its subcellular location is the nucleus matrix. In terms of biological role, probable peripherally associated component of the endosomal sorting required for transport complex III (ESCRT-III) which is involved in multivesicular bodies (MVBs) formation and sorting of endosomal cargo proteins into MVBs. MVBs contain intraluminal vesicles (ILVs) that are generated by invagination and scission from the limiting membrane of the endosome and mostly are delivered to lysosomes enabling degradation of membrane proteins, such as stimulated growth factor receptors, lysosomal enzymes and lipids. The MVB pathway appears to require the sequential function of ESCRT-O, -I,-II and -III complexes. ESCRT-III proteins mostly dissociate from the invaginating membrane before the ILV is released. The ESCRT machinery also functions in topologically equivalent membrane fission events, such as the terminal stages of cytokinesis. ESCRT-III proteins are believed to mediate the necessary vesicle extrusion and/or membrane fission activities, possibly in conjunction with the AAA ATPase VPS4. Involved in cytokinesis. Involved in recruiting VPS4A and/or VPS4B to the midbody of dividing cells. May also be involved in chromosome condensation. Targets the Polycomb group (PcG) protein BMI1/PCGF4 to regions of condensed chromatin. May play a role in stable cell cycle progression and in PcG gene silencing. The protein is Charged multivesicular body protein 1a (Chmp1a) of Mus musculus (Mouse).